A 697-amino-acid polypeptide reads, in one-letter code: DNA ligase (697 aa).

NAD(+)-binding positions include 44-48 (DGEFD), 93-94 (SL), and glutamate 123. Lysine 125 (N6-AMP-lysine intermediate) is an active-site residue. NAD(+) is bound by residues arginine 146, glutamate 186, lysine 302, and lysine 326. Zn(2+) contacts are provided by cysteine 420, cysteine 423, cysteine 439, and cysteine 445. In terms of domain architecture, BRCT spans 609–697 (SIPRNLEGLS…GPDAVTDSGV (89 aa)).

The protein belongs to the NAD-dependent DNA ligase family. LigA subfamily. The cofactor is Mg(2+). Mn(2+) serves as cofactor.

It carries out the reaction NAD(+) + (deoxyribonucleotide)n-3'-hydroxyl + 5'-phospho-(deoxyribonucleotide)m = (deoxyribonucleotide)n+m + AMP + beta-nicotinamide D-nucleotide.. Its function is as follows. DNA ligase that catalyzes the formation of phosphodiester linkages between 5'-phosphoryl and 3'-hydroxyl groups in double-stranded DNA using NAD as a coenzyme and as the energy source for the reaction. It is essential for DNA replication and repair of damaged DNA. The chain is DNA ligase from Rhodococcus opacus (strain B4).